The following is a 470-amino-acid chain: Poly(A) polymerase catalytic subunit (470 aa).

Catalysis depends on residues Asp-192 and Asp-194.

This sequence belongs to the poxviridae poly(A) polymerase catalytic subunit family. Heterodimer of a large (catalytic) subunit and a small (regulatory) subunit.

The catalysed reaction is RNA(n) + ATP = RNA(n)-3'-adenine ribonucleotide + diphosphate. Its function is as follows. Polymerase that creates the 3'-poly(A) tail of mRNA's. The sequence is that of Poly(A) polymerase catalytic subunit (PAPL) from Oryctolagus cuniculus (Rabbit).